A 745-amino-acid polypeptide reads, in one-letter code: Fatty acid oxidation complex subunit alpha (745 aa).

The enoyl-CoA hydratase stretch occupies residues Val-47–Pro-209. The 3-hydroxyacyl-CoA dehydrogenase stretch occupies residues Arg-325 to Asn-745.

This sequence in the N-terminal section; belongs to the enoyl-CoA hydratase/isomerase family. The protein in the central section; belongs to the 3-hydroxyacyl-CoA dehydrogenase family. As to quaternary structure, heterotetramer of two alpha chains (FadJ) and two beta chains (FadI).

The protein resides in the cytoplasm. It catalyses the reaction a (3S)-3-hydroxyacyl-CoA = a (2E)-enoyl-CoA + H2O. It carries out the reaction a 4-saturated-(3S)-3-hydroxyacyl-CoA = a (3E)-enoyl-CoA + H2O. The enzyme catalyses a (3S)-3-hydroxyacyl-CoA + NAD(+) = a 3-oxoacyl-CoA + NADH + H(+). The catalysed reaction is (3S)-3-hydroxybutanoyl-CoA = (3R)-3-hydroxybutanoyl-CoA. Its pathway is lipid metabolism; fatty acid beta-oxidation. In terms of biological role, catalyzes the formation of a hydroxyacyl-CoA by addition of water on enoyl-CoA. Also exhibits 3-hydroxyacyl-CoA epimerase and 3-hydroxyacyl-CoA dehydrogenase activities. The chain is Fatty acid oxidation complex subunit alpha from Yersinia enterocolitica serotype O:8 / biotype 1B (strain NCTC 13174 / 8081).